The following is a 1499-amino-acid chain: Ubiquitinating/deubiquitinating enzyme SdeA (1499 aa).

Positions 1-193 (MPKYVEGVEL…GKALRENTEK (193 aa)) are deubiquitinase. Residues His64 and Asp80 each act as for deubiquitinase activity in the active site. Residue Cys118 is the Nucleophile; for deubiquitinase activity of the active site. Residues 760–1000 (PPTRLFRGLN…KALAAFPSDT (241 aa)) form a mono-ADP-ribosyltransferase region. 766 to 772 (RGLNLSE) provides a ligand contact to NAD(+). Glu860 is subject to 5-glutamyl glutamate. Glu862 contributes to the NAD(+) binding site. Residues 1059–1181 (KEMGTIRREL…IDTKLADAYL (123 aa)) are a coiled coil.

The protein belongs to the SidE family. In terms of assembly, interacts with IcmS. In terms of processing, is able to ubiquitinate itself, but this modification is not required to ubiquitinate Rab33b. Glutamylated at Glu-860 by SidJ; glutamylation inhibits SdeA activity to catalyze the production of ADP-ribosylated ubiquitin.

The protein resides in the secreted. It localises to the host cell. The enzyme catalyses L-arginyl-[protein] + NAD(+) = N(omega)-(ADP-D-ribosyl)-L-arginyl-[protein] + nicotinamide + H(+). Ubiquitination catalyzed by SdeA is insensitive to the cysteine alkylation agent maleimide, suggesting that a cysteine conjugation of ubiquitin does not form during the reaction. Functionally, secreted effector that interferes with the host cell ubiquitin pathway and is required for intracellular bacterial replication. Catalyzes the ubiquitination of several mammalian Rab proteins (Rab33b, Rab1, Rab6a and Rab30) during L.pneumophila infection, without engaging the standard cellular enzyme cascade (E1 and E2). Transfers an ADP-ribose moiety from NAD to the 'Arg-42' residue of ubiquitin in a reaction that releases nicotinamide. The modified ubiquitin is subsequently transferred to serine residues of the substrate protein via a phosphoribose linker that results in the release of AMP. Cannot ubiquitinate the endosomal Rab5 or the cytoskeletal small GTPase Rac1. Also acts as a deubiquitinase (DUB), catalyzing the cleavage of three of the most abundant polyubiquitin chains ('Lys-11', 'Lys-48' and 'Lys-63') with a distinct preference for 'Lys-63' linkages; is thus able to efficiently remove 'Lys-63'-linked polyubiquitin chains from the phagosomal surface. Is also able to remove NEDD8 from neddylated proteins, but is unable to recognize SUMO. The DUB activity of SdeA is important for regulating the dynamics of ubiquitin association with the bacterial phagosome, but is dispensable for its role in intracellular bacterial replication. The protein is Ubiquitinating/deubiquitinating enzyme SdeA of Legionella pneumophila subsp. pneumophila (strain Philadelphia 1 / ATCC 33152 / DSM 7513).